The primary structure comprises 257 residues: uncharacterized protein (257 aa).

This is an uncharacterized protein from Bacillus subtilis (strain 168).